The sequence spans 429 residues: UDP-N-acetylglucosamine 1-carboxyvinyltransferase (429 aa).

Position 22–23 (22–23 (KN)) interacts with phosphoenolpyruvate. Arg-102 serves as a coordination point for UDP-N-acetyl-alpha-D-glucosamine. The active-site Proton donor is Cys-126. Position 126 is a 2-(S-cysteinyl)pyruvic acid O-phosphothioketal (Cys-126). UDP-N-acetyl-alpha-D-glucosamine contacts are provided by residues 131-135 (RPVDL), Asp-316, and Ile-338.

Belongs to the EPSP synthase family. MurA subfamily.

It localises to the cytoplasm. The enzyme catalyses phosphoenolpyruvate + UDP-N-acetyl-alpha-D-glucosamine = UDP-N-acetyl-3-O-(1-carboxyvinyl)-alpha-D-glucosamine + phosphate. The protein operates within cell wall biogenesis; peptidoglycan biosynthesis. Its function is as follows. Cell wall formation. Adds enolpyruvyl to UDP-N-acetylglucosamine. In Rhodopseudomonas palustris (strain TIE-1), this protein is UDP-N-acetylglucosamine 1-carboxyvinyltransferase.